The primary structure comprises 493 residues: Probable cytochrome P450 508A2 (493 aa).

The helical transmembrane segment at 1-21 (MIFGIIVYLFLIYILHNAYSK) threads the bilayer. Position 439 (Cys-439) interacts with heme.

This sequence belongs to the cytochrome P450 family. The cofactor is heme.

It is found in the membrane. In Dictyostelium discoideum (Social amoeba), this protein is Probable cytochrome P450 508A2 (cyp508A2-1).